We begin with the raw amino-acid sequence, 384 residues long: Polyketide synthase BAS (384 aa).

Cysteine 157 serves as the catalytic Nucleophile and monoketide coumarate intermediate. Residue cysteine 157 is modified to S-(4-hydroxycinnamyl)cysteine.

The protein belongs to the thiolase-like superfamily. Chalcone/stilbene synthases family. As to quaternary structure, homodimer.

It carries out the reaction 4-coumaroyl-CoA + malonyl-CoA + H2O + H(+) = 4-hydroxybenzalacetone + 2 CO2 + 2 CoA. The protein operates within secondary metabolite biosynthesis; flavonoid biosynthesis. Polyketide synthase producing 4-hydroxybenzalacetone. Can use p-coumaryl-CoA as substrate but does not accept hexanoyl-CoA, isobutyryl-CoA, isovaleryl-CoA, and acetyl-CoA as a substrates. Catalyzes the initial key reaction step in the biosynthesis of phenylbutanoids. The polypeptide is Polyketide synthase BAS (BAS) (Rheum palmatum (Chinese rhubarb)).